The chain runs to 195 residues: Sec-independent protein translocase protein TatB (195 aa).

Residues 1-21 (MFDIGFSELALIAVVALVVLG) traverse the membrane as a helical segment. The segment at 130–195 (EPGSAQPHTP…SSTSPQEKTP (66 aa)) is disordered. 2 stretches are compositionally biased toward low complexity: residues 145 to 157 (PVVA…APAP) and 175 to 195 (TTHA…EKTP).

Belongs to the TatB family. The Tat system comprises two distinct complexes: a TatABC complex, containing multiple copies of TatA, TatB and TatC subunits, and a separate TatA complex, containing only TatA subunits. Substrates initially bind to the TatABC complex, which probably triggers association of the separate TatA complex to form the active translocon.

The protein localises to the cell inner membrane. Its function is as follows. Part of the twin-arginine translocation (Tat) system that transports large folded proteins containing a characteristic twin-arginine motif in their signal peptide across membranes. Together with TatC, TatB is part of a receptor directly interacting with Tat signal peptides. TatB may form an oligomeric binding site that transiently accommodates folded Tat precursor proteins before their translocation. The polypeptide is Sec-independent protein translocase protein TatB (Xanthomonas campestris pv. campestris (strain 8004)).